The primary structure comprises 213 residues: Pyrrolidone-carboxylate peptidase (213 aa).

Active-site residues include Glu81, Cys144, and His166.

This sequence belongs to the peptidase C15 family. As to quaternary structure, homodimer.

It localises to the cytoplasm. The catalysed reaction is Release of an N-terminal pyroglutamyl group from a polypeptide, the second amino acid generally not being Pro.. Removes 5-oxoproline from various penultimate amino acid residues except L-proline. In Pseudomonas fluorescens, this protein is Pyrrolidone-carboxylate peptidase (pcp).